A 264-amino-acid chain; its full sequence is Protein DSE2 (264 aa).

The first 23 residues, 1–23 (MQFKKSSIVSFLSLLGSLTKAAA), serve as a signal peptide directing secretion. Over residues 75-92 (TRESVVTSTLSSTSLLPE) the composition is skewed to low complexity. Positions 75 to 213 (TRESVVTSTL…STSTSSSSVL (139 aa)) are disordered. Over residues 93–104 (TTEESTQEDEQT) the composition is skewed to acidic residues. Low complexity-rich tracts occupy residues 105–147 (TDFT…PTTS), 157–168 (STSVITTKSTSK), and 178–211 (TSTL…SSSS). D247 carries GPI-anchor amidated aspartate lipidation. The propeptide at 248–264 (AATTYTKTRTVYATISS) is removed in mature form.

The protein resides in the secreted. It is found in the cell wall. It localises to the membrane. Involved in pseudohyphal growth, cell wall metabolism and required for the separation of the mother and daughter cells. The sequence is that of Protein DSE2 (DSE2) from Kluyveromyces lactis (strain ATCC 8585 / CBS 2359 / DSM 70799 / NBRC 1267 / NRRL Y-1140 / WM37) (Yeast).